The chain runs to 199 residues: Peroxiredoxin-1 (199 aa).

The residue at position 2 (S2) is an N-acetylserine. The Thioredoxin domain maps to 6 to 165; sequence AKIGHRAPQF…TLRLVQAFQF (160 aa). Position 7 is an N6-acetyllysine; alternate (K7). Residue K7 forms a Glycyl lysine isopeptide (Lys-Gly) (interchain with G-Cter in SUMO2); alternate linkage. N6-acetyllysine is present on residues K16 and K27. Position 35 is an N6-acetyllysine; alternate (K35). K35 bears the N6-succinyllysine; alternate mark. The active-site Cysteine sulfenic acid (-SOH) intermediate is C52. The residue at position 90 (T90) is a Phosphothreonine. Residue K120 forms a Glycyl lysine isopeptide (Lys-Gly) (interchain with G-Cter in SUMO2) linkage. Position 136 is an N6-acetyllysine (K136). A disordered region spans residues 176 to 199; the sequence is GWKPGSDTIKPDVQKSKEYFSKQK. Residues 184–199 are compositionally biased toward basic and acidic residues; that stretch reads IKPDVQKSKEYFSKQK. Residue K185 forms a Glycyl lysine isopeptide (Lys-Gly) (interchain with G-Cter in SUMO1) linkage. K197 carries the post-translational modification N6-acetyllysine.

The protein belongs to the peroxiredoxin family. AhpC/Prx1 subfamily. Homodimer; disulfide-linked, upon oxidation. 5 homodimers assemble to form a ring-like decamer. Interacts with GDPD5; forms a mixed-disulfide with GDPD5. Interacts with SESN1 and SESN2. Interacts with FAM107A. Post-translationally, phosphorylated on Thr-90 during the M-phase, which leads to a decrease in enzymatic activity. Acetylation increases reducing activity and resistance to superoxidation. Deacetylated by HDAC6 which decreases reducing activity.

Its subcellular location is the cytoplasm. The enzyme catalyses a hydroperoxide + [thioredoxin]-dithiol = an alcohol + [thioredoxin]-disulfide + H2O. Thiol-specific peroxidase that catalyzes the reduction of hydrogen peroxide and organic hydroperoxides to water and alcohols, respectively. Plays a role in cell protection against oxidative stress by detoxifying peroxides and as sensor of hydrogen peroxide-mediated signaling events. Might participate in the signaling cascades of growth factors and tumor necrosis factor-alpha by regulating the intracellular concentrations of H(2)O(2). Reduces an intramolecular disulfide bond in GDPD5 that gates the ability to GDPD5 to drive postmitotic motor neuron differentiation. In Bos taurus (Bovine), this protein is Peroxiredoxin-1 (PRDX1).